Reading from the N-terminus, the 553-residue chain is Phenylalanine--tRNA ligase beta subunit (553 aa).

In terms of domain architecture, B5 spans 273–349 (FNVRNIDIEV…RAFGYNNITP (77 aa)). Mg(2+)-binding residues include aspartate 327, aspartate 333, aspartate 336, and aspartate 337.

Belongs to the phenylalanyl-tRNA synthetase beta subunit family. Type 2 subfamily. As to quaternary structure, tetramer of two alpha and two beta subunits. It depends on Mg(2+) as a cofactor.

Its subcellular location is the cytoplasm. It catalyses the reaction tRNA(Phe) + L-phenylalanine + ATP = L-phenylalanyl-tRNA(Phe) + AMP + diphosphate + H(+). The protein is Phenylalanine--tRNA ligase beta subunit of Methanocella arvoryzae (strain DSM 22066 / NBRC 105507 / MRE50).